Consider the following 195-residue polypeptide: MKRTAEIDRSTSETRIHLKLTIDGTGLSAIRTTVPFLDHMLHLFARHGLFDLTVEAQGDIDIDFHHTVEDIGIVLGEAFRQALGDKKGIVRYGTARIPMDETLADVTVDLSGRPYLVYNVDLPKVKVGEFDAELAREFFQAFANNCGCNLHLNLLYGENVHHIIEACFKGFGRSLDSATRQDARLHGVMSTKGVL.

This sequence belongs to the imidazoleglycerol-phosphate dehydratase family.

Its subcellular location is the cytoplasm. The catalysed reaction is D-erythro-1-(imidazol-4-yl)glycerol 3-phosphate = 3-(imidazol-4-yl)-2-oxopropyl phosphate + H2O. Its pathway is amino-acid biosynthesis; L-histidine biosynthesis; L-histidine from 5-phospho-alpha-D-ribose 1-diphosphate: step 6/9. The polypeptide is Imidazoleglycerol-phosphate dehydratase (Trichlorobacter lovleyi (strain ATCC BAA-1151 / DSM 17278 / SZ) (Geobacter lovleyi)).